The primary structure comprises 263 residues: Non-homologous end joining protein Ku 3 (263 aa).

Residues 6 to 169 (FGLVSVPVQL…WADEVRDPHR (164 aa)) enclose the Ku domain.

This sequence belongs to the prokaryotic Ku family. In terms of assembly, homodimer. Interacts with LigD.

With LigD forms a non-homologous end joining (NHEJ) DNA repair enzyme, which repairs dsDNA breaks with reduced fidelity. Binds linear dsDNA with 5'- and 3'- overhangs but not closed circular dsDNA nor ssDNA. Recruits and stimulates the ligase activity of LigD. The protein is Non-homologous end joining protein Ku 3 of Saccharopolyspora erythraea (strain ATCC 11635 / DSM 40517 / JCM 4748 / NBRC 13426 / NCIMB 8594 / NRRL 2338).